Here is a 311-residue protein sequence, read N- to C-terminus: Malate dehydrogenase (311 aa).

NAD(+)-binding positions include 7–13 and Asp34; that span reads GAAGGIG. Substrate contacts are provided by Arg81 and Arg87. Residues Asn94 and 117–119 contribute to the NAD(+) site; that span reads ITN. 2 residues coordinate substrate: Asn119 and Arg153. Residue His177 is the Proton acceptor of the active site. Met227 contacts NAD(+).

The protein belongs to the LDH/MDH superfamily. MDH type 1 family. Homodimer.

It carries out the reaction (S)-malate + NAD(+) = oxaloacetate + NADH + H(+). In terms of biological role, catalyzes the reversible oxidation of malate to oxaloacetate. The protein is Malate dehydrogenase of Aliivibrio fischeri (strain ATCC 700601 / ES114) (Vibrio fischeri).